The primary structure comprises 197 residues: Probable molybdenum cofactor guanylyltransferase (197 aa).

Residues 12 to 14 (LAG), Lys-24, Asp-71, and Asp-103 each bind GTP. Asp-103 is a binding site for Mg(2+).

It belongs to the MobA family. It depends on Mg(2+) as a cofactor.

It localises to the cytoplasm. It catalyses the reaction Mo-molybdopterin + GTP + H(+) = Mo-molybdopterin guanine dinucleotide + diphosphate. Functionally, transfers a GMP moiety from GTP to Mo-molybdopterin (Mo-MPT) cofactor (Moco or molybdenum cofactor) to form Mo-molybdopterin guanine dinucleotide (Mo-MGD) cofactor. This is Probable molybdenum cofactor guanylyltransferase from Mycolicibacterium paratuberculosis (strain ATCC BAA-968 / K-10) (Mycobacterium paratuberculosis).